A 199-amino-acid polypeptide reads, in one-letter code: Protein MM_0484 (199 aa).

Residues 5–196 (TEGRAAVKLA…EKEPDGEVIE (192 aa)) form the AMMECR1 domain.

The sequence is that of Protein MM_0484 from Methanosarcina mazei (strain ATCC BAA-159 / DSM 3647 / Goe1 / Go1 / JCM 11833 / OCM 88) (Methanosarcina frisia).